Here is a 704-residue protein sequence, read N- to C-terminus: Elongation factor G (704 aa).

The tr-type G domain maps to 6-282; the sequence is NKVRNIGIMA…AVIDYLPTPL (277 aa). GTP is bound by residues 15-22, 79-83, and 133-136; these read AHIDAGKT, DTPGH, and NKMD.

The protein belongs to the TRAFAC class translation factor GTPase superfamily. Classic translation factor GTPase family. EF-G/EF-2 subfamily.

The protein localises to the cytoplasm. Catalyzes the GTP-dependent ribosomal translocation step during translation elongation. During this step, the ribosome changes from the pre-translocational (PRE) to the post-translocational (POST) state as the newly formed A-site-bound peptidyl-tRNA and P-site-bound deacylated tRNA move to the P and E sites, respectively. Catalyzes the coordinated movement of the two tRNA molecules, the mRNA and conformational changes in the ribosome. This is Elongation factor G from Corynebacterium diphtheriae (strain ATCC 700971 / NCTC 13129 / Biotype gravis).